The primary structure comprises 323 residues: RNA polymerase sigma factor SigB (323 aa).

The interval 1–228 is sufficient to interact with RbpA; the sequence is MADAPTRATT…DMPVGSEEEA (228 aa). The interval 25-59 is sigma-70 factor domain-1; the sequence is DLVRVYLNGIGKTALLNAAGEVELAKRIEAGLYAE. The segment at 90 to 160 is sigma-70 factor domain-2; sequence LLEANLRLVV…TRGMADQSRT (71 aa). The Polymerase core binding motif lies at 114 to 117; it reads DLIQ. The interval 169 to 245 is sigma-70 factor domain-3; sequence EQVNKLARIK…DAEAMSAENA (77 aa). Residues 258 to 311 are sigma-70 factor domain-4; sequence VLATLDEREHQVIRLRFGLDDGQPRTLDQIGKLFGLSRERVRQIERDVMSKLRH. Positions 284-303 form a DNA-binding region, H-T-H motif; sequence LDQIGKLFGLSRERVRQIER.

Belongs to the sigma-70 factor family. As to quaternary structure, monomer. Interacts transiently with the RNA polymerase catalytic core formed by RpoA, RpoB, RpoC and RpoZ (2 alpha, 1 beta, 1 beta' and 1 omega subunit) to form the RNA polymerase holoenzyme that can initiate transcription.

Functionally, sigma factors are initiation factors that promote the attachment of RNA polymerase to specific initiation sites and are then released. A non-essential principal sigma factor that responds to cell envelope stress and hypoxia. The chain is RNA polymerase sigma factor SigB (sigB) from Mycobacterium tuberculosis (strain CDC 1551 / Oshkosh).